The following is a 330-amino-acid chain: WRKY transcription factor WRKY51 (330 aa).

The segment at 39 to 61 is disordered; it reads QTGTSERSPAPAPAQEQQQQQQV. Positions 51 to 60 are enriched in low complexity; sequence PAQEQQQQQQ. Residues 74–81 carry the Nuclear localization signal motif; that stretch reads FKKVISML. 2 disordered regions span residues 91–117 and 302–330; these read RGPV…SAVS and YEGE…LPLA. Residues 101-117 are compositionally biased toward low complexity; that stretch reads PAASEPAPVRSSPSAVS. Residues 245-311 constitute a DNA-binding region (WRKY); the sequence is KVADIPADDF…YEGEHRHTPS (67 aa). The segment covering 318-330 has biased composition (pro residues); that stretch reads PPAPPPPLALPLA.

Belongs to the WRKY group II-a family. In terms of tissue distribution, highly expressed in aleurone cells. In seeds, predominantly present in the plumule, radicle and scutellum of the embryo.

The protein resides in the nucleus. Transcription factor. Interacts, when in complex with WRKY71, specifically with the W box (5'-(T)TGAC[CT]-3'), a frequently occurring elicitor-responsive cis-acting element. Represses specifically gibberellic acid (GA)-induced promoters in aleurone cells, probably by interfering with GAM1. This is WRKY transcription factor WRKY51 from Oryza sativa subsp. indica (Rice).